The primary structure comprises 553 residues: Arginine--tRNA ligase (553 aa).

A 'HIGH' region motif is present at residues 130–140; sequence ANPTGPIHLGG.

The protein belongs to the class-I aminoacyl-tRNA synthetase family. In terms of assembly, monomer.

The protein localises to the cytoplasm. It catalyses the reaction tRNA(Arg) + L-arginine + ATP = L-arginyl-tRNA(Arg) + AMP + diphosphate. The sequence is that of Arginine--tRNA ligase from Corynebacterium aurimucosum (strain ATCC 700975 / DSM 44827 / CIP 107346 / CN-1) (Corynebacterium nigricans).